The chain runs to 398 residues: ATP-dependent RNA helicase eIF4A (398 aa).

The Q motif signature appears at 25 to 53; that stretch reads DSFDAMNLRAELLRGVYAYGFERPSAIQQ. Residues 56–226 form the Helicase ATP-binding domain; that stretch reads IMPVIKGSDV…TKFMRDPVRI (171 aa). Residue 69 to 76 coordinates ATP; sequence AQSGTGKT. Positions 174-177 match the DEAD box motif; sequence DEAD. The 162-residue stretch at 237-398 folds into the Helicase C-terminal domain; the sequence is GIKQFYIAVE…EMPMNVADLI (162 aa).

This sequence belongs to the DEAD box helicase family. eIF4A subfamily. In terms of assembly, component of the eIF4F complex, which composition varies with external and internal environmental conditions. It is composed of at least eIF4A, eIF4E and eIF4G.

Its subcellular location is the cytoplasm. The catalysed reaction is ATP + H2O = ADP + phosphate + H(+). Functionally, ATP-dependent RNA helicase which is a subunit of the eIF4F complex involved in cap recognition and is required for mRNA binding to ribosome. In the current model of translation initiation, eIF4A unwinds RNA secondary structures in the 5'-UTR of mRNAs which is necessary to allow efficient binding of the small ribosomal subunit, and subsequent scanning for the initiator codon. In Coccidioides immitis (strain RS) (Valley fever fungus), this protein is ATP-dependent RNA helicase eIF4A (TIF1).